The following is a 148-amino-acid chain: FAD synthase (148 aa).

Residues 14 to 15 (VF), 19 to 22 (HAGH), and Asp100 contribute to the ATP site.

Belongs to the archaeal FAD synthase family. Homodimer. A divalent metal cation serves as cofactor.

The catalysed reaction is FMN + ATP + H(+) = FAD + diphosphate. Its pathway is cofactor biosynthesis; FAD biosynthesis; FAD from FMN: step 1/1. In terms of biological role, catalyzes the transfer of the AMP portion of ATP to flavin mononucleotide (FMN) to produce flavin adenine dinucleotide (FAD) coenzyme. This Pyrococcus horikoshii (strain ATCC 700860 / DSM 12428 / JCM 9974 / NBRC 100139 / OT-3) protein is FAD synthase.